Here is a 26-residue protein sequence, read N- to C-terminus: Beta-hexosaminidase (26 aa).

In terms of processing, glycosylated. Detected in dry seeds and cotyledons.

The enzyme catalyses Hydrolysis of terminal non-reducing N-acetyl-D-hexosamine residues in N-acetyl-beta-D-hexosaminides.. With respect to regulation, inhibited by AgNO(3) at a concentration of 0.1 mM. Strongly inhibited by CdCl(2), ZnCl(2) and FeCl(3) and moderately by CoCl(2), CuSO(4) and NiCl(2) at 10 mM concentration. CaCl(2), MgCl(2), MnSO(4) and KI also have a slight inhibitory effect of 20%-25% at 10 mM concentration. Activated to a small extent by MgCl(2) at 0.1 mM concentration but inhibited with increasing concentration. Not affected by carbohydrates such as fucose, galactose and glucose but displays a slight decrease in activity up to 25% with lactose, alpha-mannose and N-acetyl-galactosamine (GalNAc). Functionally, has hexosaminidase activity. Active with both p-nitrophenyl-beta-D-N-acetylglucosamine (pNP-GlcNAc) and p-nitrophenyl-beta-D-N-acetylgalactosamine (pNP-GalNAc). Not active toward p-nitrophenyl-beta-D-N,N'-diacetylchitobiose (pNP-(GlcNAc)2) or p-nitrophenyl-beta-D-N,N',N''-triacetylchitobiose (pNP-(GlcNAc)3). Removes terminal GlcNAc and may be involved in storage protein degradation. The chain is Beta-hexosaminidase from Lupinus albus (White lupine).